Reading from the N-terminus, the 331-residue chain is Phosphate acyltransferase (331 aa).

The protein belongs to the PlsX family. In terms of assembly, homodimer. Probably interacts with PlsY.

It is found in the cytoplasm. The catalysed reaction is a fatty acyl-[ACP] + phosphate = an acyl phosphate + holo-[ACP]. It functions in the pathway lipid metabolism; phospholipid metabolism. Catalyzes the reversible formation of acyl-phosphate (acyl-PO(4)) from acyl-[acyl-carrier-protein] (acyl-ACP). This enzyme utilizes acyl-ACP as fatty acyl donor, but not acyl-CoA. This chain is Phosphate acyltransferase, found in Chlorobaculum tepidum (strain ATCC 49652 / DSM 12025 / NBRC 103806 / TLS) (Chlorobium tepidum).